A 417-amino-acid chain; its full sequence is Blood group Rh(D) polypeptide (417 aa).

11 helical membrane-spanning segments follow: residues 12 to 32 (CLPLWALTLEAALILLFYFFT), 44 to 64 (LVASYQVGQDLTVMAAIGLGF), 77 to 97 (VAFNLFMLALGVQWAILLDGF), 107 to 127 (VITLFSIRLATMSALSVLISV), 130 to 150 (VLGKVNLAQLVVMVLVEVTAL), 167 to 187 (MNMMHIYVFAAYFGLSVAWCL), 203 to 223 (TIPSLSAMLGALFLWMFWPSF), 238 to 258 (VFNTYYAVAVSVVTAISGSSL), 287 to 307 (LIPSPWLAMVLGLVAGLISVG), 334 to 354 (LLGLLGEIIYIVLLVLDTVGA), and 358 to 378 (MIGFQVLLSIGELSLAIVIAL).

This sequence belongs to the ammonium transporter (TC 2.A.49) family. Rh subfamily. In terms of processing, palmitoylated. As to expression, restricted to tissues or cell lines expressing erythroid characters.

It localises to the cell membrane. Its function is as follows. May be part of an oligomeric complex which is likely to have a transport or channel function in the erythrocyte membrane. This chain is Blood group Rh(D) polypeptide (RHD), found in Homo sapiens (Human).